The primary structure comprises 200 residues: dTTP/UTP pyrophosphatase (200 aa).

Residue Asp-81 is the Proton acceptor of the active site.

It belongs to the Maf family. YhdE subfamily. Requires a divalent metal cation as cofactor.

It localises to the cytoplasm. The enzyme catalyses dTTP + H2O = dTMP + diphosphate + H(+). It catalyses the reaction UTP + H2O = UMP + diphosphate + H(+). Nucleoside triphosphate pyrophosphatase that hydrolyzes dTTP and UTP. May have a dual role in cell division arrest and in preventing the incorporation of modified nucleotides into cellular nucleic acids. This is dTTP/UTP pyrophosphatase from Cupriavidus metallidurans (strain ATCC 43123 / DSM 2839 / NBRC 102507 / CH34) (Ralstonia metallidurans).